We begin with the raw amino-acid sequence, 83 residues long: MREGKRKNMSNKKVLTGIVVDAKCDKTIKVMVSRMIMHKTYKKIVKKRKNYVVHDEHNQYKCGDVVKIQEHIPISATKRWIVI.

This sequence belongs to the universal ribosomal protein uS17 family. In terms of assembly, part of the 30S ribosomal subunit.

Functionally, one of the primary rRNA binding proteins, it binds specifically to the 5'-end of 16S ribosomal RNA. In Ehrlichia chaffeensis (strain ATCC CRL-10679 / Arkansas), this protein is Small ribosomal subunit protein uS17.